The primary structure comprises 309 residues: GATA transcription factor 25 (309 aa).

A disordered region spans residues 1 to 35 (MFGRHSIIPNNQIGTASASAGEDHVSASATSGHIP). The segment covering 8 to 18 (IPNNQIGTASA) has biased composition (polar residues). The 36-residue stretch at 77-112 (PPEGANQLTISFRGQVYVFDAVGADKVDAVLSLLGG) folds into the Tify domain. The 43-residue stretch at 146–188 (RAQSLDRFRKKRNARCFEKKVRYGVRQEVALRMARNKGQFTSS) folds into the CCT domain. The span at 187 to 202 (SSKMTDGAYNSGTDQD) shows a compositional bias: polar residues. The tract at residues 187–207 (SSKMTDGAYNSGTDQDSAQDD) is disordered. Residues 208 to 267 (AHPEISCTHCGISSKCTPMMRRGPSGPRTLCNACGLFWANRGTLRDLSKKTEENQLALMK) form a GATA-type zinc finger. The segment at 290 to 309 (EHTSMVSLANGDNSNLLGDH) is disordered. Over residues 293–309 (SMVSLANGDNSNLLGDH) the composition is skewed to polar residues.

Belongs to the type IV zinc-finger family. Class C subfamily. In terms of tissue distribution, predominantly expressed in shoot apices, inflorescences and roots.

The protein localises to the nucleus. Functionally, transcriptional activator that specifically binds 5'-GATA-3' or 5'-GAT-3' motifs within gene promoters. The protein is GATA transcription factor 25 (GATA25) of Arabidopsis thaliana (Mouse-ear cress).